The primary structure comprises 371 residues: tRNA-specific 2-thiouridylase MnmA (371 aa).

ATP-binding positions include 13 to 20 and Met39; that span reads GMSGGVDS. The interaction with target base in tRNA stretch occupies residues 99–101; that stretch reads NPD. Cys104 (nucleophile) is an active-site residue. A disulfide bridge links Cys104 with Cys200. Gly128 contacts ATP. The segment at 150–152 is interaction with tRNA; the sequence is KDQ. Cys200 serves as the catalytic Cysteine persulfide intermediate. The segment at 308 to 309 is interaction with tRNA; the sequence is RY.

It belongs to the MnmA/TRMU family.

It localises to the cytoplasm. It carries out the reaction S-sulfanyl-L-cysteinyl-[protein] + uridine(34) in tRNA + AH2 + ATP = 2-thiouridine(34) in tRNA + L-cysteinyl-[protein] + A + AMP + diphosphate + H(+). In terms of biological role, catalyzes the 2-thiolation of uridine at the wobble position (U34) of tRNA, leading to the formation of s(2)U34. This is tRNA-specific 2-thiouridylase MnmA from Listeria innocua serovar 6a (strain ATCC BAA-680 / CLIP 11262).